A 390-amino-acid polypeptide reads, in one-letter code: tRNA-specific 2-thiouridylase MnmA (390 aa).

ATP is bound by residues 33–40 and Met59; that span reads AMSGGVDS. The active-site Nucleophile is Cys131. A disulfide bridge links Cys131 with Cys230. Gly155 lines the ATP pocket. The segment at 180-182 is interaction with tRNA; sequence KDQ. Cys230 acts as the Cysteine persulfide intermediate in catalysis.

It belongs to the MnmA/TRMU family.

The protein resides in the cytoplasm. It carries out the reaction S-sulfanyl-L-cysteinyl-[protein] + uridine(34) in tRNA + AH2 + ATP = 2-thiouridine(34) in tRNA + L-cysteinyl-[protein] + A + AMP + diphosphate + H(+). Catalyzes the 2-thiolation of uridine at the wobble position (U34) of tRNA, leading to the formation of s(2)U34. The sequence is that of tRNA-specific 2-thiouridylase MnmA from Symbiobacterium thermophilum (strain DSM 24528 / JCM 14929 / IAM 14863 / T).